The following is a 383-amino-acid chain: Acetylornithine deacetylase (383 aa).

Histidine 80 lines the Zn(2+) pocket. Residue aspartate 82 is part of the active site. A Zn(2+)-binding site is contributed by aspartate 112. Glutamate 144 is a catalytic residue. Residues glutamate 145, glutamate 169, and histidine 355 each coordinate Zn(2+).

The protein belongs to the peptidase M20A family. ArgE subfamily. Homodimer. Zn(2+) serves as cofactor. Co(2+) is required as a cofactor. Requires glutathione as cofactor.

The protein resides in the cytoplasm. The enzyme catalyses N(2)-acetyl-L-ornithine + H2O = L-ornithine + acetate. Its pathway is amino-acid biosynthesis; L-arginine biosynthesis; L-ornithine from N(2)-acetyl-L-ornithine (linear): step 1/1. Its function is as follows. Catalyzes the hydrolysis of the amide bond of N(2)-acetylated L-amino acids. Cleaves the acetyl group from N-acetyl-L-ornithine to form L-ornithine, an intermediate in L-arginine biosynthesis pathway, and a branchpoint in the synthesis of polyamines. The chain is Acetylornithine deacetylase from Salmonella typhimurium (strain LT2 / SGSC1412 / ATCC 700720).